A 194-amino-acid polypeptide reads, in one-letter code: Dephospho-CoA kinase (194 aa).

In terms of domain architecture, DPCK spans 4 to 194 (VIGLTGSIGM…VKEILQKLGA (191 aa)). 12 to 17 (GMGKTT) provides a ligand contact to ATP.

The protein belongs to the CoaE family.

It localises to the cytoplasm. The catalysed reaction is 3'-dephospho-CoA + ATP = ADP + CoA + H(+). It functions in the pathway cofactor biosynthesis; coenzyme A biosynthesis; CoA from (R)-pantothenate: step 5/5. In terms of biological role, catalyzes the phosphorylation of the 3'-hydroxyl group of dephosphocoenzyme A to form coenzyme A. The polypeptide is Dephospho-CoA kinase (Agrobacterium fabrum (strain C58 / ATCC 33970) (Agrobacterium tumefaciens (strain C58))).